A 359-amino-acid chain; its full sequence is Histamine H2 receptor (359 aa).

Over 1–22 (MAPNGTASSFCLDSTACKITIT) the chain is Extracellular. A glycan (N-linked (GlcNAc...) asparagine) is linked at Asn4. Residues 23 to 44 (VVLAVLILITVAGNVVVCLAVG) form a helical membrane-spanning segment. Residues 45 to 57 (LNRRLRNLTNCFI) lie on the Cytoplasmic side of the membrane. A helical transmembrane segment spans residues 58–81 (VSLAITDLLLGLLVLPFSAIYQLS). Residues 82-92 (CKWSFGKVFCN) lie on the Extracellular side of the membrane. The cysteines at positions 91 and 174 are disulfide-linked. A helical membrane pass occupies residues 93–114 (IYTSLDVMLCTASILNLFMISL). The Cytoplasmic segment spans residues 115–134 (DRYCAVMDPLRYPVLVTPVR). Residues 135 to 159 (VAISLVLIWVISITLSFLSIHLGWN) form a helical membrane-spanning segment. The Extracellular segment spans residues 160 to 180 (SRNETSKGNHTTSKCKVQVNE). A helical membrane pass occupies residues 181-204 (VYGLVDGLVTFYLPLLIMCITYYR). Residues 205–234 (IFKVARDQAKRINHISSWKAATIREHKATV) are Cytoplasmic-facing. The chain crosses the membrane as a helical span at residues 235–258 (TLAAVMGAFIICWFPYFTAFVYRG). The Extracellular portion of the chain corresponds to 259-267 (LRGDDAINE). The helical transmembrane segment at 268-289 (VLEAIVLWLGYANSALNPILYA) threads the bilayer. Over 290–359 (ALNRDFRTGY…VTAPQGATDR (70 aa)) the chain is Cytoplasmic. Residue Cys305 is the site of S-palmitoyl cysteine attachment. The tract at residues 316 to 340 (SLRSNASQLSRTQSREPRQQEEKPL) is disordered. The segment covering 317–327 (LRSNASQLSRT) has biased composition (polar residues). Positions 328–340 (QSREPRQQEEKPL) are enriched in basic and acidic residues.

This sequence belongs to the G-protein coupled receptor 1 family.

The protein localises to the cell membrane. Functionally, the H2 subclass of histamine receptors mediates gastric acid secretion. Also appears to regulate gastrointestinal motility and intestinal secretion. Possible role in regulating cell growth and differentiation. The activity of this receptor is mediated by G proteins which activate adenylyl cyclase and, through a separate G protein-dependent mechanism, the phosphoinositide/protein kinase (PKC) signaling pathway. The chain is Histamine H2 receptor (HRH2) from Gorilla gorilla gorilla (Western lowland gorilla).